A 314-amino-acid chain; its full sequence is MVTYLLANFGGPRTSQEIVSFLQALLTDRDVTGGMIPSMLHRPLFSYIAKRRAPHVARQYAYLGGGSPIFQDTERLAQNLSQELQASVIPFHRYLPETHRETLQALQESQGSIVGIPLFPHYTFAVTGSIIRFFLQHLPEKPISWITQFGVHPEFVSCMQQHIRDCLAAQQIAVEDCYFLFSVHGLPQRHIRLGDPYAQQCQASFEALRGELEGKIAFQSKFGIGKWLDPSTQEVCQSLRTKKRHIVIVPFGFVSDHIETLHEIDHLYVPILLQKGYRVVRIPAINASSRWVSSLAAIVRSSPQETSLEPLLMP.

2 residues coordinate Fe cation: H184 and E259.

Belongs to the ferrochelatase family.

Its subcellular location is the cytoplasm. It carries out the reaction heme b + 2 H(+) = protoporphyrin IX + Fe(2+). It functions in the pathway porphyrin-containing compound metabolism; protoheme biosynthesis; protoheme from protoporphyrin-IX: step 1/1. Catalyzes the ferrous insertion into protoporphyrin IX. This chain is Ferrochelatase, found in Chlamydia trachomatis serovar A (strain ATCC VR-571B / DSM 19440 / HAR-13).